We begin with the raw amino-acid sequence, 510 residues long: P-(S)-hydroxymandelonitrile lyase (510 aa).

The signal sequence occupies residues 1–34 (MAVFISSSGSPGRATATTTTTTTLLLAVLAAAAA). 116–118 (NGG) is a binding site for substrate. Disulfide bonds link Cys121/Cys377, Cys277/Cys289, and Cys313/Cys344. Asn172 carries an N-linked (GlcNAc...) asparagine glycan. 212-213 (ES) provides a ligand contact to substrate. Residue Ser213 is part of the active site. Asn365 is a glycosylation site (N-linked (GlcNAc...) asparagine). Residues Asp414 and His469 contribute to the active site. Residue 465 to 469 (SGAGH) participates in substrate binding.

This sequence belongs to the peptidase S10 family. As to quaternary structure, heterotetramer of two A and two B chains. The A and B chains are linked by a disulfide bond. The N-terminus of chain A is blocked. In terms of tissue distribution, primary leaves of seedlings.

The catalysed reaction is (S)-4-hydroxymandelonitrile = 4-hydroxybenzaldehyde + hydrogen cyanide. Functionally, involved in cyanogenesis, the release of HCN from injured tissues. Is involved in the catabolism of the cyanogenic glycoside dhurrin. The polypeptide is P-(S)-hydroxymandelonitrile lyase (Sorghum bicolor (Sorghum)).